A 445-amino-acid polypeptide reads, in one-letter code: Phosphoglucosamine mutase (445 aa).

The active-site Phosphoserine intermediate is the Ser-102. Mg(2+) is bound by residues Ser-102, Asp-240, Asp-242, and Asp-244. Ser-102 is subject to Phosphoserine.

The protein belongs to the phosphohexose mutase family. Mg(2+) is required as a cofactor. Activated by phosphorylation.

It catalyses the reaction alpha-D-glucosamine 1-phosphate = D-glucosamine 6-phosphate. In terms of biological role, catalyzes the conversion of glucosamine-6-phosphate to glucosamine-1-phosphate. This is Phosphoglucosamine mutase from Mycolicibacterium vanbaalenii (strain DSM 7251 / JCM 13017 / BCRC 16820 / KCTC 9966 / NRRL B-24157 / PYR-1) (Mycobacterium vanbaalenii).